Consider the following 976-residue polypeptide: Vacuolar membrane protease (976 aa).

Over 1–15 (MKLKSVFRSVLKYRK) the chain is Cytoplasmic. A helical membrane pass occupies residues 16-36 (TNLSLLLLITYSIITLLYIFD). Topologically, residues 37–359 (HERYKLNLPK…KFFVISAKTL (323 aa)) are vacuolar. Residues N96 and N121 are each glycosylated (N-linked (GlcNAc...) asparagine). Zn(2+)-binding residues include H156 and D168. N189 is a glycosylation site (N-linked (GlcNAc...) asparagine). E200 serves as the catalytic Proton acceptor. E201 is a Zn(2+) binding site. 2 N-linked (GlcNAc...) asparagine glycosylation sites follow: N212 and N217. 2 residues coordinate Zn(2+): E226 and H300. Residues 360 to 380 (FYWNCIFLLVSPVVAIGLYLI) traverse the membrane as a helical segment. The Cytoplasmic segment spans residues 381–392 (SRDRMTWKSHSW). Residues 393 to 412 (LSWTRFPLSLAAGIIVQKLF) form a helical membrane-spanning segment. At 413 to 428 (SNDIIRSNPLTFSRNY) the chain is on the vacuolar side. Residues 429–449 (FWPISAFFTQVIFTSYVLINC) traverse the membrane as a helical segment. Topologically, residues 450–461 (SNFFFPCADMKS) are cytoplasmic. Residues 462–482 (LSIIELFIILWTILLFTSKLL) form a helical membrane-spanning segment. Topologically, residues 483 to 496 (YSSDYRYTGLYPLS) are vacuolar. Residues 497–517 (IFFLLSTIAAILRLLALALGM) form a helical membrane-spanning segment. The Cytoplasmic segment spans residues 518 to 627 (RTRKRLGREC…NSLKLEYTDY (110 aa)). The segment at 528–610 (RDHHSNYSSH…PLLKGSNSME (83 aa)) is disordered. Residues 549–558 (NLEQPQDQFT) are compositionally biased toward polar residues. Low complexity predominate over residues 559-570 (SSQDDQASIQDD). Positions 582–601 (NVDEDHGMDSSSQQHDERVP) are enriched in basic and acidic residues. The helical transmembrane segment at 628-648 (AWIIQFLLIVPIPSFILFNSV) threads the bilayer. Residues 649–668 (DVIMDALNHTVQEGSKATFD) are Vacuolar-facing. N656 carries an N-linked (GlcNAc...) asparagine glycan. The helical transmembrane segment at 669-689 (VLRFGMVGSILMALPILPFFY) threads the bilayer. Residues 690–692 (KVN) are Cytoplasmic-facing. Residues 693–713 (YITISLTALLFLISASKTLLV) form a helical membrane-spanning segment. Residues 714-976 (HPFTNSNPLK…LVIVKDAIIL (263 aa)) lie on the Vacuolar side of the membrane. 5 N-linked (GlcNAc...) asparagine glycosylation sites follow: N768, N796, N811, N866, and N937.

The protein belongs to the peptidase M28 family. Zn(2+) serves as cofactor.

Its subcellular location is the vacuole membrane. Its function is as follows. May be involved in vacuolar sorting and osmoregulation. The chain is Vacuolar membrane protease from Saccharomyces cerevisiae (strain Lalvin EC1118 / Prise de mousse) (Baker's yeast).